The chain runs to 238 residues: MORN repeat-containing protein 3 (238 aa).

MORN repeat units follow at residues 38–60, 62–84, 91–113, 114–136, 137–159, 160–182, and 184–205; these read YTGE…RRKS, YEGD…DSNT, YSGY…AKEY, YEGE…NGDI, YEGE…NENR, YEGS…NKGQ, and YEGV…GRTE.

It is found in the cytoplasmic vesicle. The protein resides in the secretory vesicle. It localises to the acrosome. In terms of biological role, assembles a suppression complex (suppresome) by tethering SIRT1 and MDM2 to regulate composite modifications of p53/TP53. Confers both deacetylation-mediated functional inactivation, by SIRT1, and ubiquitination-dependent degradation, by MDM2, of p53/TP53, promoting a proliferative and cell survival behaviors. May play a role in the regulation of spermatogenesis. This Xenopus laevis (African clawed frog) protein is MORN repeat-containing protein 3 (morn3).